The sequence spans 394 residues: Nicotinate phosphoribosyltransferase (394 aa).

Phosphohistidine; by autocatalysis is present on His-218.

It belongs to the NAPRTase family. Transiently phosphorylated on a His residue during the reaction cycle. Phosphorylation strongly increases the affinity for substrates and increases the rate of nicotinate D-ribonucleotide production. Dephosphorylation regenerates the low-affinity form of the enzyme, leading to product release.

It catalyses the reaction nicotinate + 5-phospho-alpha-D-ribose 1-diphosphate + ATP + H2O = nicotinate beta-D-ribonucleotide + ADP + phosphate + diphosphate. The protein operates within cofactor biosynthesis; NAD(+) biosynthesis; nicotinate D-ribonucleotide from nicotinate: step 1/1. In terms of biological role, catalyzes the synthesis of beta-nicotinate D-ribonucleotide from nicotinate and 5-phospho-D-ribose 1-phosphate at the expense of ATP. This is Nicotinate phosphoribosyltransferase from Xylella fastidiosa (strain 9a5c).